Reading from the N-terminus, the 266-residue chain is Zinc finger protein CG30 (266 aa).

An RING-type zinc finger spans residues 8–63 (CNICFSVAEIKNYFMQPIDRLTMIPVLELDTCKHQLCSMCIRKIRKRKKTPCPLCR).

The protein localises to the host nucleus. Plays a role in the proper expression of late and very late genes. In Bombyx mori nuclear polyhedrosis virus (BmNPV), this protein is Zinc finger protein CG30 (CG30).